A 443-amino-acid chain; its full sequence is MAKYFGTDGIRGEVANSTITVEFTQKLGNAVGSLINQKNYPKFVIVGQDTRSSGGFLKFALVSGLNAAGIDVLDLGVVPTPVVAFMTVKHRAAAGFVITASHNKFTDNGIKLFSSNGFKLDDALEEEVEDMIDGDFIYQPQFKFGSYKILANAIDEYIESIHSRFAKFVNYKGKVVVDCAHGAASHNFEALLDKFGINYVSIASNPDGLNINVGCGATCVSNIKKAVKEQKADLGISLDGDADRIIIVDENGQEIDGDGILNILAQYSDICGGTNGIVGTQMTNMSYENHYRANKIPFIRSKVGDRYVLEDLVKYGYKIGGESSGHVINLNFGTTGDGLFTAIQLLAIFSQAYKPVSEFKLQGELMQQTLINVPLTKKVAREDLQKVASDVNDVEKRLGNRGRVLLRPSGTEPVLRVMVEADDKSLATNEAEYLVEKVKQKLV.

Ser-101 (phosphoserine intermediate) is an active-site residue. Mg(2+) is bound by residues Ser-101, Asp-239, Asp-241, and Asp-243. At Ser-101 the chain carries Phosphoserine.

Belongs to the phosphohexose mutase family. The cofactor is Mg(2+). In terms of processing, activated by phosphorylation.

The catalysed reaction is alpha-D-glucosamine 1-phosphate = D-glucosamine 6-phosphate. Functionally, catalyzes the conversion of glucosamine-6-phosphate to glucosamine-1-phosphate. This is Phosphoglucosamine mutase from Francisella tularensis subsp. holarctica (strain FTNF002-00 / FTA).